Consider the following 800-residue polypeptide: Ribosome-releasing factor 2, mitochondrial (800 aa).

Positions 21 to 307 (SKVRNIGIIA…AIANYLPSPS (287 aa)) constitute a tr-type G domain. GTP contacts are provided by residues 30 to 37 (AHIDAGKT), 95 to 99 (DTPGH), and 147 to 150 (NKMD).

This sequence belongs to the TRAFAC class translation factor GTPase superfamily. Classic translation factor GTPase family. EF-G/EF-2 subfamily.

The protein localises to the mitochondrion. Mitochondrial GTPase that mediates the disassembly of ribosomes from messenger RNA at the termination of mitochondrial protein biosynthesis. Not involved in the GTP-dependent ribosomal translocation step during translation elongation. The protein is Ribosome-releasing factor 2, mitochondrial of Kluyveromyces lactis (strain ATCC 8585 / CBS 2359 / DSM 70799 / NBRC 1267 / NRRL Y-1140 / WM37) (Yeast).